The primary structure comprises 102 residues: Pole-localizer protein TmaR (102 aa).

Positions 7–34 (IINQARRKNKLKRELQDNQKKIRDNQKR) form a coiled coil.

Belongs to the pole-localizer TmaR family.

It localises to the cytoplasm. Its function is as follows. Pole-localizer protein involved in the regulation of several cellular processes. In Aliivibrio salmonicida (strain LFI1238) (Vibrio salmonicida (strain LFI1238)), this protein is Pole-localizer protein TmaR.